The chain runs to 105 residues: Putative thioredoxin-5 (105 aa).

Residues 1–104 enclose the Thioredoxin domain; the sequence is MYKEPKNESE…VALENMVKKL (104 aa). Active-site nucleophile residues include C30 and C33. C30 and C33 are oxidised to a cystine.

Belongs to the thioredoxin family.

In terms of biological role, participates in various redox reactions through the reversible oxidation of its active center dithiol to a disulfide and catalyzes dithiol-disulfide exchange reactions. In Dictyostelium discoideum (Social amoeba), this protein is Putative thioredoxin-5 (trxE).